We begin with the raw amino-acid sequence, 523 residues long: GMP synthase [glutamine-hydrolyzing] (523 aa).

The Glutamine amidotransferase type-1 domain occupies 8–205 (KILILDFGSQ…VVDICGCETN (198 aa)). Cysteine 85 functions as the Nucleophile in the catalytic mechanism. Catalysis depends on residues histidine 179 and glutamate 181. In terms of domain architecture, GMPS ATP-PPase spans 206 to 398 (WTAENIIEDA…LGLPAEMLNR (193 aa)). An ATP-binding site is contributed by 233–239 (SGGVDSS).

In terms of assembly, homodimer.

The catalysed reaction is XMP + L-glutamine + ATP + H2O = GMP + L-glutamate + AMP + diphosphate + 2 H(+). It functions in the pathway purine metabolism; GMP biosynthesis; GMP from XMP (L-Gln route): step 1/1. In terms of biological role, catalyzes the synthesis of GMP from XMP. This chain is GMP synthase [glutamine-hydrolyzing], found in Histophilus somni (strain 2336) (Haemophilus somnus).